A 173-amino-acid chain; its full sequence is Crossover junction endodeoxyribonuclease RuvC (173 aa).

Catalysis depends on residues aspartate 8, glutamate 69, and aspartate 141. Mg(2+)-binding residues include aspartate 8, glutamate 69, and aspartate 141.

Belongs to the RuvC family. In terms of assembly, homodimer which binds Holliday junction (HJ) DNA. The HJ becomes 2-fold symmetrical on binding to RuvC with unstacked arms; it has a different conformation from HJ DNA in complex with RuvA. In the full resolvosome a probable DNA-RuvA(4)-RuvB(12)-RuvC(2) complex forms which resolves the HJ. The cofactor is Mg(2+).

The protein resides in the cytoplasm. It carries out the reaction Endonucleolytic cleavage at a junction such as a reciprocal single-stranded crossover between two homologous DNA duplexes (Holliday junction).. The RuvA-RuvB-RuvC complex processes Holliday junction (HJ) DNA during genetic recombination and DNA repair. Endonuclease that resolves HJ intermediates. Cleaves cruciform DNA by making single-stranded nicks across the HJ at symmetrical positions within the homologous arms, yielding a 5'-phosphate and a 3'-hydroxyl group; requires a central core of homology in the junction. The consensus cleavage sequence is 5'-(A/T)TT(C/G)-3'. Cleavage occurs on the 3'-side of the TT dinucleotide at the point of strand exchange. HJ branch migration catalyzed by RuvA-RuvB allows RuvC to scan DNA until it finds its consensus sequence, where it cleaves and resolves the cruciform DNA. This is Crossover junction endodeoxyribonuclease RuvC from Stenotrophomonas maltophilia (strain K279a).